The sequence spans 328 residues: Cytochrome c biogenesis protein CcsA (328 aa).

Helical transmembrane passes span phenylalanine 15–proline 35, leucine 36–leucine 56, isoleucine 68–isoleucine 88, leucine 97–leucine 117, valine 142–isoleucine 162, valine 236–asparagine 256, tryptophan 263–leucine 283, and alanine 297–leucine 317.

The protein belongs to the CcmF/CycK/Ccl1/NrfE/CcsA family. As to quaternary structure, may interact with ccs1.

The protein localises to the cellular thylakoid membrane. Functionally, required during biogenesis of c-type cytochromes (cytochrome c6 and cytochrome f) at the step of heme attachment. This chain is Cytochrome c biogenesis protein CcsA, found in Microcystis aeruginosa (strain NIES-843 / IAM M-2473).